A 301-amino-acid chain; its full sequence is Peptidyl-prolyl cis-trans isomerase E (301 aa).

The RRM domain occupies 5 to 83 (KRVLYVGGLA…GRTIRVNLAK (79 aa)). A phosphoserine mark is found at Ser91, Ser97, and Ser119. A disordered region spans residues 107–140 (GKTLEENKEEEGSEPPKAETQEGEPAAKKARSNP). The 157-residue stretch at 143–299 (YMDIKIGNKP…QKVIIADCGE (157 aa)) folds into the PPIase cyclophilin-type domain.

The protein belongs to the cyclophilin-type PPIase family. PPIase E subfamily. Identified in the spliceosome C complex. Component of the XAB2 complex, a multimeric protein complex composed of XAB2, PRPF19, AQR, ZNF830, ISY1, and PPIE. Identified in a pentameric intron-binding (IB) complex composed of AQR, XAB2, ISY1, ZNF830 and PPIE that is incorporated into the spliceosome as a preassembled complex. The IB complex does not contain PRPF19. Interacts (via RNA-binding domain) with KMT2A (via the third PHD-type zinc-finger).

The protein localises to the nucleus. The enzyme catalyses [protein]-peptidylproline (omega=180) = [protein]-peptidylproline (omega=0). In terms of biological role, involved in pre-mRNA splicing as component of the spliceosome. Combines RNA-binding and PPIase activities. Binds mRNA and has a preference for single-stranded RNA molecules with poly-A and poly-U stretches, suggesting it binds to the poly(A)-region in the 3'-UTR of mRNA molecules. Catalyzes the cis-trans isomerization of proline imidic peptide bonds in proteins. Inhibits KMT2A activity; this requires proline isomerase activity. This Pongo abelii (Sumatran orangutan) protein is Peptidyl-prolyl cis-trans isomerase E (PPIE).